A 227-amino-acid chain; its full sequence is UPF0173 metal-dependent hydrolase BCAH820_4729 (227 aa).

It belongs to the UPF0173 family.

This is UPF0173 metal-dependent hydrolase BCAH820_4729 from Bacillus cereus (strain AH820).